The primary structure comprises 322 residues: Sideroflexin-2 (322 aa).

An N-acetylmethionine modification is found at Met1. 5 helical membrane-spanning segments follow: residues 100–122, 142–164, 174–192, 228–250, and 265–287; these read MIIT…WQWV, SVRQ…AVGM, LVGR…CVNI, VVIS…MERL, and PLQV…GLFP.

The protein belongs to the sideroflexin family. As to expression, widely expressed, highest levels in kidney, liver, and pancreas.

The protein localises to the mitochondrion inner membrane. Its subcellular location is the mitochondrion outer membrane. It catalyses the reaction L-serine(in) = L-serine(out). Its function is as follows. Mitochondrial amino-acid transporter that mediates transport of serine into mitochondria. Involved in mitochondrial iron homeostasis by regulating heme biosynthesis. This Homo sapiens (Human) protein is Sideroflexin-2.